Consider the following 380-residue polypeptide: Cytochrome b (380 aa).

The next 4 membrane-spanning stretches (helical) occupy residues phenylalanine 34 to methionine 54, tryptophan 78 to isoleucine 99, tryptophan 114 to leucine 134, and phenylalanine 179 to threonine 199. Histidine 84 and histidine 98 together coordinate heme b. Histidine 183 and histidine 197 together coordinate heme b. An a ubiquinone-binding site is contributed by histidine 202. 4 consecutive transmembrane segments (helical) span residues leucine 227 to serine 247, leucine 289 to histidine 309, leucine 321 to serine 341, and phenylalanine 348 to proline 368.

This sequence belongs to the cytochrome b family. As to quaternary structure, the cytochrome bc1 complex contains 11 subunits: 3 respiratory subunits (MT-CYB, CYC1 and UQCRFS1), 2 core proteins (UQCRC1 and UQCRC2) and 6 low-molecular weight proteins (UQCRH/QCR6, UQCRB/QCR7, UQCRQ/QCR8, UQCR10/QCR9, UQCR11/QCR10 and a cleavage product of UQCRFS1). This cytochrome bc1 complex then forms a dimer. Requires heme b as cofactor.

The protein localises to the mitochondrion inner membrane. Its function is as follows. Component of the ubiquinol-cytochrome c reductase complex (complex III or cytochrome b-c1 complex) that is part of the mitochondrial respiratory chain. The b-c1 complex mediates electron transfer from ubiquinol to cytochrome c. Contributes to the generation of a proton gradient across the mitochondrial membrane that is then used for ATP synthesis. This chain is Cytochrome b (MT-CYB), found in Oceanodroma melania (Black storm-petrel).